The sequence spans 431 residues: uncharacterized protein (431 aa).

4Fe-4S ferredoxin-type domains follow at residues valine 336–aspartate 367 and isoleucine 362–glycine 391.

This is an uncharacterized protein from Methanothermobacter thermautotrophicus (strain ATCC 29096 / DSM 1053 / JCM 10044 / NBRC 100330 / Delta H) (Methanobacterium thermoautotrophicum).